We begin with the raw amino-acid sequence, 417 residues long: Serine hydroxymethyltransferase (417 aa).

(6S)-5,6,7,8-tetrahydrofolate contacts are provided by residues leucine 121 and 125–127; that span reads GHL. An N6-(pyridoxal phosphate)lysine modification is found at lysine 230. 355–357 contributes to the (6S)-5,6,7,8-tetrahydrofolate binding site; it reads SPF.

This sequence belongs to the SHMT family. Homodimer. Pyridoxal 5'-phosphate is required as a cofactor.

The protein resides in the cytoplasm. It catalyses the reaction (6R)-5,10-methylene-5,6,7,8-tetrahydrofolate + glycine + H2O = (6S)-5,6,7,8-tetrahydrofolate + L-serine. It participates in one-carbon metabolism; tetrahydrofolate interconversion. The protein operates within amino-acid biosynthesis; glycine biosynthesis; glycine from L-serine: step 1/1. Functionally, catalyzes the reversible interconversion of serine and glycine with tetrahydrofolate (THF) serving as the one-carbon carrier. This reaction serves as the major source of one-carbon groups required for the biosynthesis of purines, thymidylate, methionine, and other important biomolecules. Also exhibits THF-independent aldolase activity toward beta-hydroxyamino acids, producing glycine and aldehydes, via a retro-aldol mechanism. The polypeptide is Serine hydroxymethyltransferase (Marinobacter nauticus (strain ATCC 700491 / DSM 11845 / VT8) (Marinobacter aquaeolei)).